The following is a 153-amino-acid chain: Cofilin (153 aa).

The ADF-H domain maps to 4-148; the sequence is SGATVSQDCI…EYDSILKTVS (145 aa).

It belongs to the actin-binding proteins ADF family.

Its subcellular location is the cytoplasm. It is found in the cytoskeleton. It localises to the nucleus matrix. Functionally, controls reversibly actin polymerization and depolymerization in a pH-sensitive manner. It has the ability to bind G- and F-actin in a 1:1 ratio of cofilin to actin. Binding to F-actin is regulated by tropomyosin. It is the major component of intranuclear and cytoplasmic actin rods. Required for accumulation of actin at the cell division site via depolymerizing actin at the cell ends. In association with myosin II has a role in the assembly of the contractile ring via severing actin filaments. Involved in the maintenance of the contractile ring once formed. In association with profilin and capping protein, has a role in the mitotic reorganization of the actin cytoskeleton. This is Cofilin (COF1) from Gibberella zeae (strain ATCC MYA-4620 / CBS 123657 / FGSC 9075 / NRRL 31084 / PH-1) (Wheat head blight fungus).